The sequence spans 219 residues: Probable GTP-binding protein EngB (219 aa).

The 175-residue stretch at 31-205 (VGVEIAFAGR…LAILNEWCHP (175 aa)) folds into the EngB-type G domain. GTP contacts are provided by residues 39–46 (GRSNAGKS), 66–70 (GRTQL), 84–87 (DLPG), 151–154 (TKSD), and 184–186 (FSS). Ser46 and Thr68 together coordinate Mg(2+).

The protein belongs to the TRAFAC class TrmE-Era-EngA-EngB-Septin-like GTPase superfamily. EngB GTPase family. It depends on Mg(2+) as a cofactor.

Necessary for normal cell division and for the maintenance of normal septation. The polypeptide is Probable GTP-binding protein EngB (Shewanella baltica (strain OS223)).